We begin with the raw amino-acid sequence, 499 residues long: Cobyric acid synthase (499 aa).

Residues 266–449 (RLEIAVVRLP…LHGLFDNHLW (184 aa)) enclose the GATase cobBQ-type domain. Residue cysteine 344 is the Nucleophile of the active site. Residue histidine 441 is part of the active site.

Belongs to the CobB/CobQ family. CobQ subfamily.

Its pathway is cofactor biosynthesis; adenosylcobalamin biosynthesis. Catalyzes amidations at positions B, D, E, and G on adenosylcobyrinic A,C-diamide. NH(2) groups are provided by glutamine, and one molecule of ATP is hydrogenolyzed for each amidation. The sequence is that of Cobyric acid synthase from Synechococcus sp. (strain JA-2-3B'a(2-13)) (Cyanobacteria bacterium Yellowstone B-Prime).